A 138-amino-acid chain; its full sequence is Putative pre-16S rRNA nuclease (138 aa).

Belongs to the YqgF nuclease family.

It is found in the cytoplasm. In terms of biological role, could be a nuclease involved in processing of the 5'-end of pre-16S rRNA. The sequence is that of Putative pre-16S rRNA nuclease from Caldicellulosiruptor saccharolyticus (strain ATCC 43494 / DSM 8903 / Tp8T 6331).